We begin with the raw amino-acid sequence, 263 residues long: uncharacterized protein (263 aa).

A disordered region spans residues 22–44; sequence IDGSDDQSDRTRSSSGDSTSNSL. Over residues 34 to 43 the composition is skewed to low complexity; the sequence is SSSGDSTSNS.

It is found in the mitochondrion. This is an uncharacterized protein from Schizosaccharomyces pombe (strain 972 / ATCC 24843) (Fission yeast).